A 352-amino-acid chain; its full sequence is uncharacterized protein (352 aa).

Residues 1-22 form the signal peptide; sequence MIFKKTILIFIISFFFISISFA. Low complexity predominate over residues 25–47; it reads SSSSSSSSSSSSSSWSSSESSSS. The segment at 25–49 is disordered; sequence SSSSSSSSSSSSSSWSSSESSSSPA. Asn76, Asn110, Asn182, Asn212, and Asn223 each carry an N-linked (GlcNAc...) asparagine glycan.

The protein localises to the secreted. This is an uncharacterized protein from Dictyostelium discoideum (Social amoeba).